The following is a 376-amino-acid chain: 3-dehydroquinate synthase (376 aa).

NAD(+) contacts are provided by residues glycine 115–aspartate 119, threonine 139–serine 140, lysine 152, and lysine 161. Residues glutamate 194, histidine 256, and histidine 275 each contribute to the Zn(2+) site.

Belongs to the sugar phosphate cyclases superfamily. Dehydroquinate synthase family. Requires Co(2+) as cofactor. The cofactor is Zn(2+). NAD(+) is required as a cofactor.

The protein localises to the cytoplasm. It carries out the reaction 7-phospho-2-dehydro-3-deoxy-D-arabino-heptonate = 3-dehydroquinate + phosphate. Its pathway is metabolic intermediate biosynthesis; chorismate biosynthesis; chorismate from D-erythrose 4-phosphate and phosphoenolpyruvate: step 2/7. Its function is as follows. Catalyzes the conversion of 3-deoxy-D-arabino-heptulosonate 7-phosphate (DAHP) to dehydroquinate (DHQ). The polypeptide is 3-dehydroquinate synthase (Rhizobium leguminosarum bv. trifolii (strain WSM2304)).